A 286-amino-acid polypeptide reads, in one-letter code: MTIINGKTKLLGVIGDPIGHTLSPPMHNAAIDALGLNYVYLPLPIAPENLETAIAGLSAIDLEGFSVTIPHKLAIIPLLSQITEKARLVGAVNTVWRTETGWQGTNTDVDGFLAPLKSLDKDWSQVNPVILGNGGAARAVVVACAQLGCGEIHVVGRNQKKLDPFKESWANTSLYDLLEVHSWDELEGLVSTTELLINSTPIGMSPQGEQSPVELELLDLLPPSAIAYDLIYNPRPTKFLRLARTRGIRIIDGLEMLVNQGAIALEIWLGQPVPVSVMREALLKQF.

Residues 21–23 (TLS) and T68 each bind shikimate. The active-site Proton acceptor is the K72. An NADP(+)-binding site is contributed by E84. Positions 93 and 108 each coordinate shikimate. NADP(+) contacts are provided by residues 132 to 136 (GNGGA) and L230. Residue Y232 coordinates shikimate. G253 serves as a coordination point for NADP(+).

It belongs to the shikimate dehydrogenase family. Homodimer.

The catalysed reaction is shikimate + NADP(+) = 3-dehydroshikimate + NADPH + H(+). The protein operates within metabolic intermediate biosynthesis; chorismate biosynthesis; chorismate from D-erythrose 4-phosphate and phosphoenolpyruvate: step 4/7. Functionally, involved in the biosynthesis of the chorismate, which leads to the biosynthesis of aromatic amino acids. Catalyzes the reversible NADPH linked reduction of 3-dehydroshikimate (DHSA) to yield shikimate (SA). The protein is Shikimate dehydrogenase (NADP(+)) of Microcystis aeruginosa (strain NIES-843 / IAM M-2473).